A 298-amino-acid chain; its full sequence is Multifunctional dioxygenase ausE (298 aa).

Residues R72 and Q127 each coordinate substrate. Fe cation contacts are provided by H130 and D132. T167 is a binding site for substrate. H214 is a binding site for Fe cation. R226 lines the substrate pocket.

This sequence belongs to the PhyH family. In terms of assembly, homodimer. Fe cation is required as a cofactor.

The enzyme catalyses preaustinoid A1 + 2-oxoglutarate + O2 = preaustinoid A2 + succinate + CO2 + H2O. It catalyses the reaction preaustinoid A2 + 2-oxoglutarate + O2 = preaustinoid A3 + succinate + CO2 + H2O. It carries out the reaction berkeleyone A + 2-oxoglutarate + O2 = preaustinoid A + succinate + CO2 + H2O. Its pathway is secondary metabolite biosynthesis; terpenoid biosynthesis. Multifunctional dioxygenase; part of the gene cluster B that mediates the biosynthesis of austinol and dehydroaustinol, two fungal meroterpenoids. The first step of the pathway is the synthesis of 3,5-dimethylorsellinic acid by the polyketide synthase ausA. 3,5-dimethylorsellinic acid is then prenylated by the polyprenyl transferase ausN. Further epoxidation by the FAD-dependent monooxygenase ausM and cyclization by the probable terpene cyclase ausL lead to the formation of protoaustinoid A. Protoaustinoid A is then oxidized to spiro-lactone preaustinoid A3 by the combined action of the FAD-binding monooxygenases ausB and ausC, and the dioxygenase ausE. Acid-catalyzed keto-rearrangement and ring contraction of the tetraketide portion of preaustinoid A3 by ausJ lead to the formation of preaustinoid A4. The aldo-keto reductase ausK, with the help of ausH, is involved in the next step by transforming preaustinoid A4 into isoaustinone which is in turn hydroxylated by the P450 monooxygenase ausI to form austinolide. Finally, the cytochrome P450 monooxygenase ausG modifies austinolide to austinol. Austinol can be further modified to dehydroaustinol which forms a diffusible complex with diorcinol that initiates conidiation. Due to genetic rearrangements of the clusters and the subsequent loss of some enzymes, the end products of the Emericella nidulans austinoid biosynthesis clusters are austinol and dehydroaustinol, even if additional enzymes, such as the O-acetyltransferase ausQ and the cytochrome P450 monooxygenase ausR are still functional. The polypeptide is Multifunctional dioxygenase ausE (Emericella nidulans (strain FGSC A4 / ATCC 38163 / CBS 112.46 / NRRL 194 / M139) (Aspergillus nidulans)).